Reading from the N-terminus, the 413-residue chain is 3-hydroxy-3-methylglutaryl-coenzyme A reductase (413 aa).

Active-site charge relay system residues include Glu-106 and Asp-312. His-408 (proton donor) is an active-site residue.

The protein belongs to the HMG-CoA reductase family.

It catalyses the reaction (R)-mevalonate + 2 NADP(+) + CoA = (3S)-3-hydroxy-3-methylglutaryl-CoA + 2 NADPH + 2 H(+). It participates in metabolic intermediate biosynthesis; (R)-mevalonate biosynthesis; (R)-mevalonate from acetyl-CoA: step 3/3. In terms of biological role, converts HMG-CoA to mevalonate. This is 3-hydroxy-3-methylglutaryl-coenzyme A reductase (hmgA) from Pyrococcus horikoshii (strain ATCC 700860 / DSM 12428 / JCM 9974 / NBRC 100139 / OT-3).